We begin with the raw amino-acid sequence, 217 residues long: Uracil-DNA glycosylase (217 aa).

The Proton acceptor role is filled by Asp-62.

This sequence belongs to the uracil-DNA glycosylase (UDG) superfamily. UNG family.

It localises to the cytoplasm. The enzyme catalyses Hydrolyzes single-stranded DNA or mismatched double-stranded DNA and polynucleotides, releasing free uracil.. Its function is as follows. Excises uracil residues from the DNA which can arise as a result of misincorporation of dUMP residues by DNA polymerase or due to deamination of cytosine. The chain is Uracil-DNA glycosylase from Streptococcus suis (strain 98HAH33).